Reading from the N-terminus, the 242-residue chain is Probable transcriptional regulatory protein lp_2253 (242 aa).

Residues 1 to 21 form a disordered region; that stretch reads MSGHSKWHNIQGRKNAQDAKR.

Belongs to the TACO1 family.

It localises to the cytoplasm. This Lactiplantibacillus plantarum (strain ATCC BAA-793 / NCIMB 8826 / WCFS1) (Lactobacillus plantarum) protein is Probable transcriptional regulatory protein lp_2253.